The primary structure comprises 172 residues: Shikimate kinase (172 aa).

14–19 (GAGKST) lines the ATP pocket. Position 18 (Ser18) interacts with Mg(2+). Asp36, Arg60, and Gly82 together coordinate substrate. Arg120 contacts ATP. Substrate is bound at residue Arg140. Position 157 (Gln157) interacts with ATP.

Belongs to the shikimate kinase family. In terms of assembly, monomer. Mg(2+) serves as cofactor.

Its subcellular location is the cytoplasm. The enzyme catalyses shikimate + ATP = 3-phosphoshikimate + ADP + H(+). The protein operates within metabolic intermediate biosynthesis; chorismate biosynthesis; chorismate from D-erythrose 4-phosphate and phosphoenolpyruvate: step 5/7. Its function is as follows. Catalyzes the specific phosphorylation of the 3-hydroxyl group of shikimic acid using ATP as a cosubstrate. This Pseudoalteromonas translucida (strain TAC 125) protein is Shikimate kinase.